We begin with the raw amino-acid sequence, 89 residues long: Cornifin-A (89 aa).

The segment at 1-29 (MNSQQQKQPCTPPPQPQQQQVKQPCQPPP) is disordered. A run of 8 repeats spans residues 3–14 (SQQQKQPCTPPP), 18–29 (QQQVKQPCQPPP), 31–38 (EPCIPKTK), 39–46 (EPCHPKVP), 47–54 (EPCHPKVP), 55–62 (EPCQPKVP), 63–70 (EPCQPKVP), and 71–78 (EPCPSTVT). The tract at residues 3 to 29 (SQQQKQPCTPPPQPQQQQVKQPCQPPP) is 2 X 12 AA approximate repeats. The tract at residues 31-78 (EPCIPKTKEPCHPKVPEPCHPKVPEPCQPKVPEPCQPKVPEPCPSTVT) is 6 X 8 AA approximate tandem repeats. Positions 68–89 (KVPEPCPSTVTPAPAQQKTKQK) are disordered. The span at 75–89 (STVTPAPAQQKTKQK) shows a compositional bias: polar residues.

This sequence belongs to the cornifin (SPRR) family.

The protein localises to the cytoplasm. Cross-linked envelope protein of keratinocytes. It is a keratinocyte protein that first appears in the cell cytosol, but ultimately becomes cross-linked to membrane proteins by transglutaminase. All that results in the formation of an insoluble envelope beneath the plasma membrane. The polypeptide is Cornifin-A (SPRR1A) (Homo sapiens (Human)).